We begin with the raw amino-acid sequence, 585 residues long: A-type ATP synthase subunit A (585 aa).

Residue 235 to 242 (GPFGSGKT) participates in ATP binding.

It belongs to the ATPase alpha/beta chains family. As to quaternary structure, has multiple subunits with at least A(3), B(3), C, D, E, F, H, I and proteolipid K(x).

The protein resides in the cell membrane. It catalyses the reaction ATP + H2O + 4 H(+)(in) = ADP + phosphate + 5 H(+)(out). Its function is as follows. Component of the A-type ATP synthase that produces ATP from ADP in the presence of a proton gradient across the membrane. The A chain is the catalytic subunit. The chain is A-type ATP synthase subunit A from Halobacterium salinarum (strain ATCC 29341 / DSM 671 / R1).